The following is a 1370-amino-acid chain: DNA-directed RNA polymerase subunit beta (1370 aa).

Belongs to the RNA polymerase beta chain family. In terms of assembly, the RNAP catalytic core consists of 2 alpha, 1 beta, 1 beta' and 1 omega subunit. When a sigma factor is associated with the core the holoenzyme is formed, which can initiate transcription.

The enzyme catalyses RNA(n) + a ribonucleoside 5'-triphosphate = RNA(n+1) + diphosphate. Its function is as follows. DNA-dependent RNA polymerase catalyzes the transcription of DNA into RNA using the four ribonucleoside triphosphates as substrates. The sequence is that of DNA-directed RNA polymerase subunit beta from Bordetella avium (strain 197N).